The following is a 284-amino-acid chain: Phosphate import ATP-binding protein PstB 2 (284 aa).

Residues 1 to 22 (MTLLSTLRGISSPARQQPGTQS) are compositionally biased toward polar residues. The interval 1 to 29 (MTLLSTLRGISSPARQQPGTQSESRRGGD) is disordered. Residues 36-278 (LAVAGVSHGF…PDDARARKFI (243 aa)) form the ABC transporter domain. 68 to 75 (GPSGTGKT) is an ATP binding site.

This sequence belongs to the ABC transporter superfamily. Phosphate importer (TC 3.A.1.7) family. In terms of assembly, the complex is composed of two ATP-binding proteins (PstB), two transmembrane proteins (PstC and PstA) and a solute-binding protein (PstS).

The protein localises to the cell membrane. The catalysed reaction is phosphate(out) + ATP + H2O = ADP + 2 phosphate(in) + H(+). Part of the ABC transporter complex PstSACB involved in phosphate import. Responsible for energy coupling to the transport system. The protein is Phosphate import ATP-binding protein PstB 2 of Natronomonas pharaonis (strain ATCC 35678 / DSM 2160 / CIP 103997 / JCM 8858 / NBRC 14720 / NCIMB 2260 / Gabara) (Halobacterium pharaonis).